We begin with the raw amino-acid sequence, 236 residues long: Uridylate kinase (236 aa).

Residue lysine 8–glycine 11 participates in ATP binding. Glycine 51 is a binding site for UMP. Residues glycine 52 and arginine 56 each coordinate ATP. UMP-binding positions include aspartate 71 and threonine 133 to threonine 140. Positions 161, 167, and 170 each coordinate ATP.

The protein belongs to the UMP kinase family. Homohexamer.

The protein resides in the cytoplasm. It catalyses the reaction UMP + ATP = UDP + ADP. The protein operates within pyrimidine metabolism; CTP biosynthesis via de novo pathway; UDP from UMP (UMPK route): step 1/1. Its activity is regulated as follows. Inhibited by UTP. Functionally, catalyzes the reversible phosphorylation of UMP to UDP. The chain is Uridylate kinase from Mesomycoplasma hyopneumoniae (strain 232) (Mycoplasma hyopneumoniae).